The sequence spans 197 residues: Xanthine phosphoribosyltransferase (197 aa).

2 residues coordinate xanthine: Leu-20 and Asn-27. 128 to 132 (ANGQA) lines the 5-phospho-alpha-D-ribose 1-diphosphate pocket. Lys-156 is a xanthine binding site.

The protein belongs to the purine/pyrimidine phosphoribosyltransferase family. Xpt subfamily. In terms of assembly, homodimer.

It localises to the cytoplasm. It catalyses the reaction XMP + diphosphate = xanthine + 5-phospho-alpha-D-ribose 1-diphosphate. Its pathway is purine metabolism; XMP biosynthesis via salvage pathway; XMP from xanthine: step 1/1. Its function is as follows. Converts the preformed base xanthine, a product of nucleic acid breakdown, to xanthosine 5'-monophosphate (XMP), so it can be reused for RNA or DNA synthesis. In Bacillus cereus (strain ZK / E33L), this protein is Xanthine phosphoribosyltransferase.